We begin with the raw amino-acid sequence, 97 residues long: Coiled-coil domain-containing protein 167 (97 aa).

A coiled-coil region spans residues 2 to 78 (TKKKRENLGV…LLRHENRKNT (77 aa)). A helical membrane pass occupies residues 78-95 (TLLSVAIFTVFALLYAYW).

The protein localises to the membrane. The sequence is that of Coiled-coil domain-containing protein 167 (Ccdc167) from Mus musculus (Mouse).